Here is a 482-residue protein sequence, read N- to C-terminus: MVTTNVVTGKVVVVSGPAVDCEFPEGQIPPVHTAIRIISEGFDIPTPIDIICEVQQHIGEGRVRTIALQPTEGLVRGMQAISLGHPVEVPVGPETLGRVLNVIGEPVDEMGPVNAKKHYPIHRPAPSFEDQSTRLEMFETGIKVIDLIEPYLRGGKIGLFGGAGVGKTVIIQELINNLAMKHGGVSVFAGVGERTREGNDLWLEFQESGVIDPHDYTKSKCALIYGQMTEPPGARLRVGLTGLTVAEYFRDEEHQDVLLFIDNIFRFTQAGSEVSALLGRMPSAVGYQPNLATEMGELQERITSTKNGSITSVQAIYVPADDYTDPAPATAFAHLDATTNLSRDIAALGIYPAVDPLASTSRILDPHIVGEDHYATAQMVKGTLQRYKDLQDIIAILGIDELSDEDKLTVARARKVQKFLSQPFHVAEQFTGFKGKYVKLADSIKGFREIVEGKHDGVPEQAFYMQGTIEDVLEKAEAMKKA.

Residue 161–168 (GGAGVGKT) participates in ATP binding.

The protein belongs to the ATPase alpha/beta chains family. F-type ATPases have 2 components, CF(1) - the catalytic core - and CF(0) - the membrane proton channel. CF(1) has five subunits: alpha(3), beta(3), gamma(1), delta(1), epsilon(1). CF(0) has three main subunits: a(1), b(2) and c(9-12). The alpha and beta chains form an alternating ring which encloses part of the gamma chain. CF(1) is attached to CF(0) by a central stalk formed by the gamma and epsilon chains, while a peripheral stalk is formed by the delta and b chains.

The protein localises to the cell inner membrane. The catalysed reaction is ATP + H2O + 4 H(+)(in) = ADP + phosphate + 5 H(+)(out). Functionally, produces ATP from ADP in the presence of a proton gradient across the membrane. The catalytic sites are hosted primarily by the beta subunits. This is ATP synthase subunit beta from Solibacter usitatus (strain Ellin6076).